The chain runs to 449 residues: uncharacterized protein (449 aa).

S420 carries the phosphoserine modification.

The protein belongs to the NAD kinase family.

The protein localises to the cytoplasm. Its subcellular location is the nucleus. This is an uncharacterized protein from Schizosaccharomyces pombe (strain 972 / ATCC 24843) (Fission yeast).